A 115-amino-acid polypeptide reads, in one-letter code: U3-lycotoxin-Ls1a (115 aa).

A signal peptide spans 1 to 20 (MKFVLLFGVLLVTLFSYSSA). A propeptide spanning residues 21–44 (EMLDDFDQADEDELLSSIEKEEAR) is cleaved from the precursor. 4 disulfides stabilise this stretch: C48–C63, C55–C72, C62–C87, and C74–C85.

The protein belongs to the neurotoxin 19 (CSTX) family. 01 subfamily. As to expression, expressed by the venom gland.

The protein resides in the secreted. The protein is U3-lycotoxin-Ls1a of Lycosa singoriensis (Wolf spider).